A 250-amino-acid polypeptide reads, in one-letter code: Triosephosphate isomerase (250 aa).

9-11 lines the substrate pocket; the sequence is NWK. Histidine 95 (electrophile) is an active-site residue. Glutamate 167 (proton acceptor) is an active-site residue. Residues glycine 173, serine 212, and 233-234 each bind substrate; that span reads GG.

The protein belongs to the triosephosphate isomerase family. As to quaternary structure, homodimer.

It localises to the cytoplasm. The catalysed reaction is D-glyceraldehyde 3-phosphate = dihydroxyacetone phosphate. Its pathway is carbohydrate biosynthesis; gluconeogenesis. It participates in carbohydrate degradation; glycolysis; D-glyceraldehyde 3-phosphate from glycerone phosphate: step 1/1. Involved in the gluconeogenesis. Catalyzes stereospecifically the conversion of dihydroxyacetone phosphate (DHAP) to D-glyceraldehyde-3-phosphate (G3P). In Psychromonas ingrahamii (strain DSM 17664 / CCUG 51855 / 37), this protein is Triosephosphate isomerase.